Consider the following 201-residue polypeptide: Protein TraJ (201 aa).

The protein resides in the cytoplasm. Functionally, this protein is essential for positively regulating the expression of transfer genes that are involved in the conjugal transfer of DNA between bacterial cells. The chain is Protein TraJ (traJ) from Escherichia coli.